Here is a 739-residue protein sequence, read N- to C-terminus: DEAD-box ATP-dependent RNA helicase 32 (739 aa).

A Q motif motif is present at residues 71–99 (RKFAQLPISDKTKRGLKDAKYVDMTDVQS). Residues 102-277 (IPHALCGRDI…RLSLRDPEYI (176 aa)) enclose the Helicase ATP-binding domain. 115 to 122 (ARTGSGKT) is an ATP binding site. The short motif at 225–228 (DEAD) is the DEAD box element. The Helicase C-terminal domain occupies 303–461 (KLDMLWSFIK…EVSRLLAALL (159 aa)). A coiled-coil region spans residues 643–689 (GAEMRKADIEDKKVDKERRREKRMKQKIKRKRGAMEDEEEEEEEDHD). Residues 656–725 (VDKERRREKR…GGKINTDSLS (70 aa)) form a disordered region. The segment covering 661–674 (RREKRMKQKIKRKR) has biased composition (basic residues). Residues 678 to 688 (EDEEEEEEEDH) are compositionally biased toward acidic residues.

It belongs to the DEAD box helicase family. DDX10/DBP4 subfamily.

The enzyme catalyses ATP + H2O = ADP + phosphate + H(+). The sequence is that of DEAD-box ATP-dependent RNA helicase 32 (RH32) from Arabidopsis thaliana (Mouse-ear cress).